The sequence spans 85 residues: MDNNVDTITLTDEEGKKTEFEVITKLDIEDKEYVVVVPKDEEVDEAIALRIDNNDNGEEVLVPVEEDEEFNMVAEAYELLFSEEQ.

The protein belongs to the UPF0473 family.

The chain is UPF0473 protein CLK_1946 from Clostridium botulinum (strain Loch Maree / Type A3).